The sequence spans 169 residues: Ribosome maturation factor RimM (169 aa).

Residues 92-166 enclose the PRC barrel domain; sequence NKEYYWNDIF…IVIDLTNLNN (75 aa).

The protein belongs to the RimM family. As to quaternary structure, binds ribosomal protein uS19.

The protein localises to the cytoplasm. Its function is as follows. An accessory protein needed during the final step in the assembly of 30S ribosomal subunit, possibly for assembly of the head region. Essential for efficient processing of 16S rRNA. May be needed both before and after RbfA during the maturation of 16S rRNA. It has affinity for free ribosomal 30S subunits but not for 70S ribosomes. The chain is Ribosome maturation factor RimM from Buchnera aphidicola subsp. Cinara cedri (strain Cc).